The following is a 173-amino-acid chain: Protein GrpE (173 aa).

Residues 1 to 20 (MQDEFKTDTPRTEAGSEKET) are compositionally biased toward basic and acidic residues. The disordered stretch occupies residues 1–23 (MQDEFKTDTPRTEAGSEKETMPS).

The protein belongs to the GrpE family. As to quaternary structure, homodimer.

It localises to the cytoplasm. Functionally, participates actively in the response to hyperosmotic and heat shock by preventing the aggregation of stress-denatured proteins, in association with DnaK and GrpE. It is the nucleotide exchange factor for DnaK and may function as a thermosensor. Unfolded proteins bind initially to DnaJ; upon interaction with the DnaJ-bound protein, DnaK hydrolyzes its bound ATP, resulting in the formation of a stable complex. GrpE releases ADP from DnaK; ATP binding to DnaK triggers the release of the substrate protein, thus completing the reaction cycle. Several rounds of ATP-dependent interactions between DnaJ, DnaK and GrpE are required for fully efficient folding. This Thiobacillus denitrificans (strain ATCC 25259 / T1) protein is Protein GrpE.